Reading from the N-terminus, the 665-residue chain is MCVRRELANAIRMLSIDAVQNAKSGHPGMPMGMADIAEVLWRKFFKHSPTNPNWNNRDRFILSNGHGSMLLYSLLHLTGYDLSIDELKKFRQLHSKTPGHPETGETPGVETTTGPLGQGLANAVGMAIAERTLSAYFNRPDYDIVDHYTWVFVGDGCLMEGISHEVCSLAGTLKLGKLIVFYDKNGISIDGKISNWFTDDTVMRFKSYNWHVVDKVDGHDANSIKNSIEEAKSVKDQPSIIICNTIIGFGSPNKSGTADSHGAPLGEEEIFLTRKNLNWKYSPFEIPNKIYDKWNFVKQGLKLEENWNKQFHLYKSEYPALAEEYSRRIKKKLPTQWYKKTKDYIFNLQKNPQNIATRKASQNAIEEFAALLPELIGGSADLSPSNLTMWSKSSSITENLCGNYIHYGVREFGMTAIANGISHHGGFIPYTSTFLMFVEYARNAVRMAALMNTKHIFVYTHDSIGLGEDGPTHQPIEQLANLRMTPNIDVWRPSDQVETAVAWKYAIEEKNGPTALILSRQNLFQFSRNNEQIKNISYGAYILYDSKKPIDIIFISTGSELQITLTSAKKIAALGYSVRVVSMPSNNVFDRQNIDYKESILPSYITKRIVIEASIKDFWYKYAGSEGLIIGMETFGESASEEVLFKKFGFTVENIVNKSKILLKH.

His26 lines the substrate pocket. Thiamine diphosphate is bound by residues His66 and 114–116 (GPL). A Mg(2+)-binding site is contributed by Asp155. Positions 156 and 185 each coordinate thiamine diphosphate. Residues Asn185 and Ile187 each contribute to the Mg(2+) site. His261, Arg358, and Ser385 together coordinate substrate. His261 is a binding site for thiamine diphosphate. The active-site Proton donor is Glu411. Thiamine diphosphate is bound at residue Phe437. Substrate is bound by residues His461, Asp469, and Arg520.

It belongs to the transketolase family. As to quaternary structure, homodimer. It depends on Mg(2+) as a cofactor. Requires Ca(2+) as cofactor. Mn(2+) is required as a cofactor. The cofactor is Co(2+). Thiamine diphosphate serves as cofactor.

The catalysed reaction is D-sedoheptulose 7-phosphate + D-glyceraldehyde 3-phosphate = aldehydo-D-ribose 5-phosphate + D-xylulose 5-phosphate. Catalyzes the transfer of a two-carbon ketol group from a ketose donor to an aldose acceptor, via a covalent intermediate with the cofactor thiamine pyrophosphate. This Buchnera aphidicola subsp. Schizaphis graminum (strain Sg) protein is Transketolase (tkt).